The chain runs to 501 residues: Zinc finger C3HC-type protein 1 (501 aa).

Ala2 bears the N-acetylalanine mark. Positions 21 to 73 (VVRSPEGTPQKVRELIDEGIVPEEGGTEPKDTAATFQSVDGSPQAEQSPLEST) are disordered. Position 24 is a phosphoserine (Ser24). Thr28 carries the phosphothreonine modification. A compositionally biased stretch (polar residues) spans 54–72 (ATFQSVDGSPQAEQSPLES). Phosphoserine occurs at positions 58, 62, and 68. A Phosphothreonine modification is found at Thr84. The C3HC-type zinc-finger motif lies at 102–156 (CAKYGWVTVECDMLKCSSCQAFLCASLQPTFDFGRYKERCAELKKSLCSAHEKFC). The disordered stretch occupies residues 302–421 (SPIPGVEGRP…TSPRSFFDPT (120 aa)). Phosphoserine occurs at positions 320 and 328. Residues 326–338 (TRSQDATVSPGSE) show a composition bias toward polar residues. The residue at position 332 (Thr332) is a Phosphothreonine. Phosphoserine occurs at positions 334, 337, 343, 353, 358, 369, and 380. Composition is skewed to polar residues over residues 350-359 (RTRSWESSSP) and 369-383 (SPTTRSRPVTRSMGT). Thr383 bears the Phosphothreonine mark. Ser394 is modified (phosphoserine). The short motif at 395-401 (PLRRTKR) is the Nuclear localization signal element. Phosphoserine occurs at positions 406 and 482. Low complexity predominate over residues 406 to 420 (SSSSSDTSPRSFFDP).

Interacts with TPR; this interaction mediates ZC3HC1 nuclear envelopes (NE)-association but also required for proper positioning of a substantial amount of TPR at the nuclear basket (NB). In terms of processing, phosphorylated. May also be weakly phosphorylated on Tyr residues.

Its subcellular location is the nucleus. The protein localises to the nucleus envelope. Functionally, required for proper positioning of a substantial amount of TPR at the nuclear basket (NB) through interaction with TPR. In Mus musculus (Mouse), this protein is Zinc finger C3HC-type protein 1 (Zc3hc1).